The chain runs to 210 residues: Thymidylate kinase (210 aa).

An ATP-binding site is contributed by 11–18 (GGEGAGKT).

Belongs to the thymidylate kinase family.

The enzyme catalyses dTMP + ATP = dTDP + ADP. Functionally, phosphorylation of dTMP to form dTDP in both de novo and salvage pathways of dTTP synthesis. This is Thymidylate kinase (tmk) from Halalkalibacterium halodurans (strain ATCC BAA-125 / DSM 18197 / FERM 7344 / JCM 9153 / C-125) (Bacillus halodurans).